A 271-amino-acid chain; its full sequence is Formamidopyrimidine-DNA glycosylase (271 aa).

Catalysis depends on Pro-2, which acts as the Schiff-base intermediate with DNA. Glu-3 serves as the catalytic Proton donor. Lys-58 functions as the Proton donor; for beta-elimination activity in the catalytic mechanism. 3 residues coordinate DNA: His-91, Arg-110, and Arg-152. The FPG-type zinc finger occupies 237 to 271 (SVYGRNDAPCPGCGAPIRRSRQGGRSTYFCDRCQH). The Proton donor; for delta-elimination activity role is filled by Arg-261.

Belongs to the FPG family. Monomer. Zn(2+) serves as cofactor.

It catalyses the reaction Hydrolysis of DNA containing ring-opened 7-methylguanine residues, releasing 2,6-diamino-4-hydroxy-5-(N-methyl)formamidopyrimidine.. The catalysed reaction is 2'-deoxyribonucleotide-(2'-deoxyribose 5'-phosphate)-2'-deoxyribonucleotide-DNA = a 3'-end 2'-deoxyribonucleotide-(2,3-dehydro-2,3-deoxyribose 5'-phosphate)-DNA + a 5'-end 5'-phospho-2'-deoxyribonucleoside-DNA + H(+). In terms of biological role, involved in base excision repair of DNA damaged by oxidation or by mutagenic agents. Acts as a DNA glycosylase that recognizes and removes damaged bases. Has a preference for oxidized purines, such as 7,8-dihydro-8-oxoguanine (8-oxoG). Has AP (apurinic/apyrimidinic) lyase activity and introduces nicks in the DNA strand. Cleaves the DNA backbone by beta-delta elimination to generate a single-strand break at the site of the removed base with both 3'- and 5'-phosphates. The sequence is that of Formamidopyrimidine-DNA glycosylase from Geotalea uraniireducens (strain Rf4) (Geobacter uraniireducens).